The chain runs to 512 residues: Maturase K (512 aa).

This sequence belongs to the intron maturase 2 family. MatK subfamily.

The protein localises to the plastid. Its subcellular location is the chloroplast. Functionally, usually encoded in the trnK tRNA gene intron. Probably assists in splicing its own and other chloroplast group II introns. This chain is Maturase K, found in Lemna gibba (Swollen duckweed).